The primary structure comprises 351 residues: MLETLRERLLSVQQDFTSGLKTLSDKSREAKVKSKPRTVPFLPKYSAGLELLSRYEDTWAALHRRAKDCASAGELVDSEVVMLSAHWEKKKTSLVELQEQLQQLPALIADLESMTANLTHLEASFEEVENNLLHLEDLCGQCELERCKHMQSQQLENYKKNKRKELETFKAELDAEHAQKVLEMEHTQQMKLKERQKFFEEAFQQDMEQYLSTGYLQIAERREPIGSMSSMEVNVDMLEQMDLMDISDQEALDVFLNSGGEENTVLSPALGPESSTCQNEITLQVPNPSELRAKPPSSSSTCTDSATRDISEGGESPVVQSDEEEVQVDTALATSHTDREATPDGGEDSDS.

At S11 the chain carries Phosphoserine. A coiled-coil region spans residues 88-181 (EKKKTSLVEL…ELDAEHAQKV (94 aa)). Positions 173 to 331 (LDAEHAQKVL…DEEEVQVDTA (159 aa)) are dysbindin. The short motif at 243–256 (LMDISDQEALDVFL) is the Nuclear export signal element. Positions 286-351 (PNPSELRAKP…TPDGGEDSDS (66 aa)) are disordered. The span at 296 to 305 (PSSSSTCTDS) shows a compositional bias: polar residues. Phosphoserine occurs at positions 316, 321, and 349.

The protein belongs to the dysbindin family. In terms of assembly, interacts (via its coiled coil domain) with KXD1. Interacts with CMYA5, PI4K2 and RNF151. Component of the biogenesis of lysosome-related organelles complex 1 (BLOC-1) composed of at least BLOC1S1, BLOC1S2, BLOC1S3, BLOC1S4, BLOC1S5, BLOC1S6, DTNBP1/BLOC1S7 and SNAPIN/BLOC1S8. Interacts directly in the complex with BLOC1S5, BLOC1S6 and SNAPIN/BLOC1S8. The BLOC-1 complex associates with the AP-3 protein complex and membrane protein cargos. This BLOC-1 complex also associates with the BLOC-2 complex in endosomes. Binds to DTNA and DTNB but may not be a physiological binding partner. Interacts (isoform 1 and isoform 2 only) with the DNA-dependent protein kinase complex DNA-PK; the interaction phosphorylates DTNBP1 in vitro. Interacts directly in this complex with XRCC5 and XRCC6. Interacts with AP3M1, AP3B2 and TRIM32. Interacts with XPO1; the interaction exports DTNBP1 out of the nucleus. In terms of processing, ubiquitinated by TRIM32. Ubiquitination leads to DTNBP1 degradation. Post-translationally, isoforms 1 and 2 highly phosphorylated by PRKDC in vitro. Isoform 3 only weakly phosphorylated by PRKDC in vitro. In terms of tissue distribution, detected in brain, in neurons and in neuropil. Isoform 1 is expressed in the cerebral cortex, and hippocampal frontal (HF). Specific expression in the posterior half of the superior temporal gyrus (pSTG). Higher expression of isoform 2 and 3 in the HF than in the pSTG while isoform 1 shows no difference in expression in these areas. In the HF, detected in dentate gyrus (DG) and in pyramidal cells of hippocampus CA2 and CA3 (at protein level). Expressed in all principal neuronal populations of the HF, namely pyramidal neurons in the subiculum and CA1-3, granule cells in the dense cell layer of the DG (DGg), and polymorph cells in the hilus of the DG (DGh). Maximal levels in CA2, CA3, and DGh. Isoform 2 not expressed in the cerebral cortex.

It is found in the cytoplasm. It localises to the cytoplasmic vesicle membrane. Its subcellular location is the endosome membrane. The protein localises to the melanosome membrane. The protein resides in the postsynaptic density. It is found in the endoplasmic reticulum. It localises to the nucleus. Its subcellular location is the cytoplasmic vesicle. The protein localises to the secretory vesicle. The protein resides in the synaptic vesicle membrane. It is found in the postsynaptic cell membrane. In terms of biological role, component of the BLOC-1 complex, a complex that is required for normal biogenesis of lysosome-related organelles (LRO), such as platelet dense granules and melanosomes. In concert with the AP-3 complex, the BLOC-1 complex is required to target membrane protein cargos into vesicles assembled at cell bodies for delivery into neurites and nerve terminals. The BLOC-1 complex, in association with SNARE proteins, is also proposed to be involved in neurite extension. Associates with the BLOC-2 complex to facilitate the transport of TYRP1 independent of AP-3 function. Plays a role in synaptic vesicle trafficking and in neurotransmitter release. Plays a role in the regulation of cell surface exposure of DRD2. May play a role in actin cytoskeleton reorganization and neurite outgrowth. May modulate MAPK8 phosphorylation. Appears to promote neuronal transmission and viability through regulating the expression of SNAP25 and SYN1, modulating PI3-kinase-Akt signaling and influencing glutamatergic release. Regulates the expression of SYN1 through binding to its promoter. Modulates prefrontal cortical activity via the dopamine/D2 pathway. The chain is Dysbindin (DTNBP1) from Homo sapiens (Human).